The sequence spans 519 residues: MGLQRFSFFVTLALVARSLAAIGPVASLVVANAPVSPDGFLRDAIVVNGVVPSPLITGKKGDRFQLNVVDTLTNHSMLKSTSIHWHGFFQAGTNWAEGPAFVNQCPIASGHSFLYDFHVPDQAGTFWYHSHLSTQYCDGLRGPFVVYDPKDPHASRYDVDNESTVITLTDWYHTAARLGPKFPLGADATLINGLGRSASTPTAALAVINVQHGKRYRFRLVSISCDPNYTFSIDGHNLTVIEVDGINSQPLLVDSIQIFAAQRYSFVLNANQTVGNYWVRANPNFGTVGFAGGINSAILRYQGAPVAEPTTTQTPSVIPLIETNLHPLARMPVPGSPTPGGVDKALNLAFNFNGTNFFINNATFTPPTVPVLLQILSGAQTAQDLLPAGSVYPLPAHSTIEITLPATALAPGAPHPFHLHGHAFAVVRSAGSTTYNYNDPIFRDVVSTGTPAAGDNVTIRFQTDNPGPWFLHCHIDFHLDAGFAIVFAEDVADVKAANPVPKAWSDLCPIYDGLSEANQ.

Positions 1–20 are cleaved as a signal peptide; it reads MGLQRFSFFVTLALVARSLA. Plastocyanin-like domains lie at 22–147 and 159–301; these read IGPV…FVVY and VDNE…ILRY. N-linked (GlcNAc...) asparagine glycosylation occurs at Asn-74. His-84, His-86, His-129, and His-131 together coordinate Cu cation. Intrachain disulfides connect Cys-105–Cys-508 and Cys-137–Cys-225. Residues Asn-161, Asn-228, Asn-237, Asn-271, Asn-353, and Asn-361 are each glycosylated (N-linked (GlcNAc...) asparagine). The Plastocyanin-like 3 domain maps to 368–490; it reads TVPVLLQILS…AGFAIVFAED (123 aa). Residues His-415, His-418, His-420, His-472, Cys-473, His-474, and His-478 each coordinate Cu cation.

It belongs to the multicopper oxidase family. As to quaternary structure, homodimer. Cu cation is required as a cofactor.

It is found in the secreted. The catalysed reaction is 4 hydroquinone + O2 = 4 benzosemiquinone + 2 H2O. Functionally, lignin degradation and detoxification of lignin-derived products. The protein is Laccase-2 of Trametes villosa (White-rot fungus).